A 216-amino-acid chain; its full sequence is MIITIDGPAGTGKSTLAKALAKTLQFNYCNTGAMYRTLAYARLQPDWQEVPLEDFLASPPFSFSFSKDAPLQAFYENRPLTSELISQEVANFASIFSKEPKVRAYMQTLQKRYASVGSCVFEGRDMGSKVFPHAEVKIFLTAEPEIRAKRRLKDLPEGSLSQEALTAELIARDQADQQRELDPLVIPADALVIDSSDLTISQILEKIVPLIHSRLA.

Residue 7-15 (GPAGTGKST) participates in ATP binding.

Belongs to the cytidylate kinase family. Type 1 subfamily.

It is found in the cytoplasm. It catalyses the reaction CMP + ATP = CDP + ADP. It carries out the reaction dCMP + ATP = dCDP + ADP. This chain is Cytidylate kinase, found in Chlamydia muridarum (strain MoPn / Nigg).